The primary structure comprises 842 residues: Glycogen phosphorylase, muscle form (842 aa).

Ser2 bears the N-acetylserine mark. Ser15 carries the post-translational modification Phosphoserine; by PHK; in form phosphorylase A. AMP contacts are provided by Asp43 and Tyr76. 2 positions are modified to phosphotyrosine: Tyr204 and Tyr227. 310-319 contributes to the AMP binding site; the sequence is RRFKSSKFGC. A Phosphoserine modification is found at Ser430. Tyr473 is modified (phosphotyrosine). N6-(pyridoxal phosphate)lysine is present on Lys681. Phosphoserine occurs at positions 747 and 748.

The protein belongs to the glycogen phosphorylase family. Homodimer. Homotetramer; to form the enzymatically active phosphorylase A. The cofactor is pyridoxal 5'-phosphate. Post-translationally, phosphorylation of Ser-15 converts phosphorylase B (unphosphorylated) to phosphorylase A.

The enzyme catalyses [(1-&gt;4)-alpha-D-glucosyl](n) + phosphate = [(1-&gt;4)-alpha-D-glucosyl](n-1) + alpha-D-glucose 1-phosphate. Allosterically regulated through the non-covalent binding of metabolites, being activated by AMP and inhibited by ATP, ADP, and glucose-6-phosphate. The activity is also controlled by post-translational modifications including phosphorylation. Allosteric enzyme that catalyzes the rate-limiting step in glycogen catabolism, the phosphorolytic cleavage of glycogen to produce glucose-1-phosphate, and plays a central role in maintaining cellular and organismal glucose homeostasis. The chain is Glycogen phosphorylase, muscle form from Ovis aries (Sheep).